A 184-amino-acid chain; its full sequence is UPF0398 protein BAA_1648 (184 aa).

The protein belongs to the UPF0398 family.

This Bacillus anthracis (strain A0248) protein is UPF0398 protein BAA_1648.